A 149-amino-acid chain; its full sequence is UPF0179 protein TON_1048 (149 aa).

It belongs to the UPF0179 family.

The protein is UPF0179 protein TON_1048 of Thermococcus onnurineus (strain NA1).